Consider the following 211-residue polypeptide: Histone H1-beta, late embryonic (211 aa).

Disordered stretches follow at residues 1-22 (MAAE…PSSS) and 81-211 (KGAS…AAKK). Residues 17–91 (AHPSSSEMVL…GASGSFKLGK (75 aa)) enclose the H15 domain. Composition is skewed to basic and acidic residues over residues 95–107 (GKSD…DAAK) and 114–123 (KKKEAKEKKA). 2 stretches are compositionally biased toward basic residues: residues 124 to 177 (ARSK…KKAA) and 185 to 211 (KAAK…AAKK).

The protein belongs to the histone H1/H5 family.

The protein localises to the nucleus. The protein resides in the chromosome. In terms of biological role, histones H1 are necessary for the condensation of nucleosome chains into higher-order structures. The polypeptide is Histone H1-beta, late embryonic (Strongylocentrotus purpuratus (Purple sea urchin)).